The following is a 2167-amino-acid chain: RNA editing associated helicase 2 (2167 aa).

A mitochondrion-targeting transit peptide spans 1 to 30; sequence MRAIRLTVACRYLGPFRSVTLSPVVLPVRL. Disordered regions lie at residues 503-593 and 937-969; these read RARG…DEAT and ENAT…PTNV. Low complexity predominate over residues 532–541; sequence SSTQTPSSST. Positions 1024 to 1095 constitute a DRBM domain; it reads DAKTVLQRYC…AMHALALLRR (72 aa). Positions 1348–1513 constitute a Helicase ATP-binding domain; the sequence is LRAISSNQIV…FGNAPIINVE (166 aa). Residue 1361 to 1368 participates in ATP binding; that stretch reads GTTGCGKT. The Important for binding to gRNA motif lies at 1366 to 1367; it reads GK. A DEAH box motif is present at residues 1460-1463; the sequence is DEIH. One can recognise a Helicase C-terminal domain in the interval 1585–1762; that stretch reads AIDHAVRSLD…SLCLQILALD (178 aa). Positions 2132 to 2167 are disordered; sequence IIEPCTEPKGGSSEAEKTHVNSSHTPTTSAEAGGDS. Residues 2151-2161 are compositionally biased toward polar residues; that stretch reads VNSSHTPTTSA.

The protein belongs to the DEAD box helicase family. DEAH subfamily. Component of the REH2-associated complex (REH2C) composed of helicase REH2, associated factors H2F1 and H2F2, and mRNAs at various editing stages; the formation of the complex is RNA-independent. Within the complex, interacts with H2F1; the interaction is direct. Interacts transiently, in a RNA-dependent manner, with various editing complexes including the RNA editing core (RECC) complex, the gRNA-binding (GRBC) complex (also known as the MRB1 complex) and the RNA editing mediator (REMC) complex. Interacts with GAP1/GRBC2 via RNA forming a variant of the GRBC complex known as REH2-GRBC complex. Interacts with mitochondrial ribosomes.

Its subcellular location is the mitochondrion. It carries out the reaction ATP + H2O = ADP + phosphate + H(+). In terms of biological role, ATP-dependent RNA helicase that unwinds RNA in a 3' to 5' direction and that plays an important role in mitochondrial mRNA editing, a process involving the addition and deletion of uridine (U) nucleotides in the pre-mRNA. As part of the RET2-containing gRNA-binding (RET2-GRBC) complex, acts as a scaffold for the assembly of mRNA-gRNA hybrids and the recruitment of the RNA editing core (RECC) complex. Regulates several steps of mRNA editing by the MRBC3010/GRBC6 containing gRNA-binding (MRBC3010-GRBC) complex including loading of unedited mRNA, editing in the first sequence block and subsequent editing progression across multiple sequence blocks. Also, regulates the RNA substrate content of the MRBC3010-GRBC complex as well as the association of this complex with mitoribosomes. The chain is RNA editing associated helicase 2 from Trypanosoma brucei brucei (strain 927/4 GUTat10.1).